We begin with the raw amino-acid sequence, 127 residues long: Holo-[acyl-carrier-protein] synthase (127 aa).

Positions 9 and 58 each coordinate Mg(2+).

Belongs to the P-Pant transferase superfamily. AcpS family. The cofactor is Mg(2+).

Its subcellular location is the cytoplasm. The enzyme catalyses apo-[ACP] + CoA = holo-[ACP] + adenosine 3',5'-bisphosphate + H(+). In terms of biological role, transfers the 4'-phosphopantetheine moiety from coenzyme A to a Ser of acyl-carrier-protein. The polypeptide is Holo-[acyl-carrier-protein] synthase (Shewanella baltica (strain OS185)).